The chain runs to 102 residues: Small ribosomal subunit protein uS10 (102 aa).

Belongs to the universal ribosomal protein uS10 family. In terms of assembly, part of the 30S ribosomal subunit.

Involved in the binding of tRNA to the ribosomes. The sequence is that of Small ribosomal subunit protein uS10 from Rhodospirillum centenum (strain ATCC 51521 / SW).